We begin with the raw amino-acid sequence, 180 residues long: Cell division protein SepF (180 aa).

The interval 21-40 (LDDDYDDGRAVGRDDRRAMH) is disordered. The span at 27-40 (DGRAVGRDDRRAMH) shows a compositional bias: basic and acidic residues.

Belongs to the SepF family. Homodimer. Interacts with FtsZ.

It localises to the cytoplasm. Its function is as follows. Cell division protein that is part of the divisome complex and is recruited early to the Z-ring. Probably stimulates Z-ring formation, perhaps through the cross-linking of FtsZ protofilaments. Its function overlaps with FtsA. The sequence is that of Cell division protein SepF from Frankia casuarinae (strain DSM 45818 / CECT 9043 / HFP020203 / CcI3).